Reading from the N-terminus, the 272-residue chain is Glutamate racemase (272 aa).

Substrate-binding positions include 9 to 10 (DS) and 41 to 42 (YG). Cysteine 73 (proton donor/acceptor) is an active-site residue. Residue 74 to 75 (NT) participates in substrate binding. The active-site Proton donor/acceptor is the cysteine 183. Position 184-185 (184-185 (TH)) interacts with substrate.

Belongs to the aspartate/glutamate racemases family.

It catalyses the reaction L-glutamate = D-glutamate. The protein operates within cell wall biogenesis; peptidoglycan biosynthesis. Its function is as follows. Provides the (R)-glutamate required for cell wall biosynthesis. This is Glutamate racemase from Shewanella sp. (strain MR-4).